A 419-amino-acid polypeptide reads, in one-letter code: Light-dependent chlorophyll f synthase (419 aa).

Transmembrane regions (helical) follow at residues 73–90, 162–177, 186–200, 241–262, and 323–337; these read YIGW…TAAI, HFII…EWEL, WISL…ASVS, LHQM…HGSL, and CLAA…SAAI. His162 serves as a coordination point for a chlorophyll. Residue His242 coordinates a chlorophyll.

This sequence belongs to the reaction center PufL/M/PsbA/D family. In terms of assembly, homodimer.

The protein localises to the cellular thylakoid membrane. Synthesizes chlorophyll f or chlorophyllide f (Chl f, 2-formyl chlorophyll a), probably by oxidation of chlorophyll a or chlorophyllide a and reduction of plastoquinone. The reaction is probably light-dependent. Chl f absorbs far red light (FRL, 707 nm in 100% methanol), and is synthesized when cells are grown in FRL, where it provides the advantage of extending the spectral range of harvested light in terrestrial cyanobacteria. Chl f synthesis is probably light-dependent. This Synechococcus sp. (strain ATCC 29403 / PCC 7335) protein is Light-dependent chlorophyll f synthase.